Consider the following 193-residue polypeptide: Chlorate reductase assembly chaperone protein (193 aa).

The protein belongs to the type II DMSO reductase enzyme chaperone family.

Its subcellular location is the cytoplasm. In terms of biological role, may function as a system-specific chaperone protein essential for the assembly of an active chlorate reductase ClrABC. The polypeptide is Chlorate reductase assembly chaperone protein (clrD) (Ideonella dechloratans).